A 634-amino-acid polypeptide reads, in one-letter code: RNA polymerase sigma factor RpoD (634 aa).

The segment at 177-202 is disordered; the sequence is LHDETPENDEENSSETEGEEHEDNHL. Residues 182 to 197 are compositionally biased toward acidic residues; sequence PENDEENSSETEGEEH. Residues 385 to 455 form a sigma-70 factor domain-2 region; the sequence is MIEANLRLVI…TRAIADQART (71 aa). Residues 409–412 carry the Interaction with polymerase core subunit RpoC motif; the sequence is DLIQ. The sigma-70 factor domain-3 stretch occupies residues 464–541; sequence ETINKILRTS…DKNAVAPIDA (78 aa). The interval 554–607 is sigma-70 factor domain-4; it reads VLATLTPREERVLRMRFGIGMNTDHTLEEVGQQFKVTRERIRQIESKALRKLQH. The H-T-H motif DNA-binding region spans 580–599; that stretch reads LEEVGQQFKVTRERIRQIES. The interval 608-634 is disordered; that stretch reads PIRSKKLNSFRSGGKRGDGNSSDLLEA.

The protein belongs to the sigma-70 factor family. RpoD/SigA subfamily. As to quaternary structure, interacts transiently with the RNA polymerase catalytic core.

The protein localises to the cytoplasm. Functionally, sigma factors are initiation factors that promote the attachment of RNA polymerase to specific initiation sites and are then released. This sigma factor is the primary sigma factor during exponential growth. This chain is RNA polymerase sigma factor RpoD, found in Rickettsia conorii (strain ATCC VR-613 / Malish 7).